The primary structure comprises 227 residues: Prolactin-5A1 (227 aa).

The N-terminal stretch at 1–27 (MQIQPHPSGALLLLLLSNLLMWENVAS) is a signal peptide. A glycan (N-linked (GlcNAc...) asparagine) is linked at Asn47. The cysteines at positions 85 and 204 are disulfide-linked.

Belongs to the somatotropin/prolactin family. Expressed specifically in placenta. Highly expressed in invasive trophoblast cells lining the central placental vessel.

The protein resides in the secreted. The chain is Prolactin-5A1 (Prl5a1) from Rattus norvegicus (Rat).